The following is a 558-amino-acid chain: Autophagy-related protein 18 (558 aa).

One copy of the WD 1 repeat lies at 4 to 42 (DYPPTINFINFNQTGSCISIATDDGFSIYNCDPFGKFYS). Residues 176-264 (SSSSSQVEPP…FQQTGITGSS (89 aa)) are disordered. Residues 188 to 201 (PQQRSNFSGNTLET) are compositionally biased toward polar residues. The segment covering 210-252 (GSNNSNNGNNNNNNNNNNNNNNNNNNNNNNNNNNSNNEENSNS) has biased composition (low complexity). A compositionally biased stretch (polar residues) spans 253–264 (KSFQQTGITGSS). WD repeat units follow at residues 290–330 (AHKG…KIYQ) and 335–374 (TYPT…ETSS). Positions 331–335 (FRRGT) match the L/FRRG motif motif. The segment at 400 to 432 (SSESLTESQSKDPHVDTSRSTVGRMIRKSSQQL) is disordered.

It belongs to the WD repeat PROPPIN family. In terms of assembly, component of the PI(3,5)P2 regulatory complex.

Its subcellular location is the preautophagosomal structure membrane. The protein localises to the vacuole membrane. It localises to the endosome membrane. Its function is as follows. The PI(3,5)P2 regulatory complex regulates both the synthesis and turnover of phosphatidylinositol 3,5-bisphosphate (PtdIns(3,5)P2). Necessary for proper vacuole morphology. Plays an important role in osmotically-induced vacuole fragmentation. Required for cytoplasm to vacuole transport (Cvt) vesicle formation, pexophagy and starvation-induced autophagy. Involved in correct ATG9 trafficking to the pre-autophagosomal structure. Might also be involved in premeiotic DNA replication. In Vanderwaltozyma polyspora (strain ATCC 22028 / DSM 70294 / BCRC 21397 / CBS 2163 / NBRC 10782 / NRRL Y-8283 / UCD 57-17) (Kluyveromyces polysporus), this protein is Autophagy-related protein 18 (ATG18).